Consider the following 318-residue polypeptide: Tyrosine recombinase XerD (318 aa).

The Core-binding (CB) domain occupies 5 to 90 (PSDAKLTGLF…AMRHLYRFLL (86 aa)). One can recognise a Tyr recombinase domain in the interval 111 to 310 (GLPKVLSIAD…VEERLKSLVR (200 aa)). Catalysis depends on residues R161, K185, H262, R265, and H288. Y297 serves as the catalytic O-(3'-phospho-DNA)-tyrosine intermediate.

The protein belongs to the 'phage' integrase family. XerD subfamily. In terms of assembly, forms a cyclic heterotetrameric complex composed of two molecules of XerC and two molecules of XerD.

The protein resides in the cytoplasm. Its function is as follows. Site-specific tyrosine recombinase, which acts by catalyzing the cutting and rejoining of the recombining DNA molecules. The XerC-XerD complex is essential to convert dimers of the bacterial chromosome into monomers to permit their segregation at cell division. It also contributes to the segregational stability of plasmids. In Bradyrhizobium diazoefficiens (strain JCM 10833 / BCRC 13528 / IAM 13628 / NBRC 14792 / USDA 110), this protein is Tyrosine recombinase XerD.